Here is a 161-residue protein sequence, read N- to C-terminus: Phosphopantetheine adenylyltransferase (161 aa).

Threonine 9 provides a ligand contact to substrate. ATP contacts are provided by residues 9 to 10 (TF) and histidine 17. Substrate is bound by residues lysine 41, leucine 73, and arginine 87. ATP-binding positions include 88 to 90 (GLR), glutamate 98, and 123 to 129 (YSFISST).

Belongs to the bacterial CoaD family. Homohexamer. Requires Mg(2+) as cofactor.

The protein localises to the cytoplasm. It catalyses the reaction (R)-4'-phosphopantetheine + ATP + H(+) = 3'-dephospho-CoA + diphosphate. It participates in cofactor biosynthesis; coenzyme A biosynthesis; CoA from (R)-pantothenate: step 4/5. In terms of biological role, reversibly transfers an adenylyl group from ATP to 4'-phosphopantetheine, yielding dephospho-CoA (dPCoA) and pyrophosphate. In Pseudomonas putida (strain ATCC 47054 / DSM 6125 / CFBP 8728 / NCIMB 11950 / KT2440), this protein is Phosphopantetheine adenylyltransferase.